The following is a 1492-amino-acid chain: Cystic fibrosis transmembrane conductance regulator (1492 aa).

Residues 1 to 78 (MQRSPIEKAN…KLVNALRRCF (78 aa)) lie on the Cytoplasmic side of the membrane. Residues 79–99 (FWRFLFYGILLYFVEFTKAVQ) form a helical membrane-spanning segment. Residues 82–366 (FLFYGILLYF…SAIQTWYDSL (285 aa)) enclose the ABC transmembrane type-1 1 domain. Topologically, residues 100–123 (PLCLGRIIASYNAKNTYEREIAYY) are extracellular. A helical transmembrane segment spans residues 124 to 147 (LALGLCLLFVVRTLFLHPAVFGLQ). Topologically, residues 148-196 (HLGMQMRIALFSLIYKKILKMSSRVLDKIDTGQLVSLLSNNLNKFDEGV) are cytoplasmic. The chain crosses the membrane as a helical span at residues 197–217 (AVAHFVWIAPVQVVLLMGLIW). The Extracellular segment spans residues 218 to 223 (NELTEF). A helical transmembrane segment spans residues 224–244 (VFCGLGFLIMLALFQAWLGKK). Residues 245-299 (MMQYRDKRAGKINERLAITSEIIDNIQSVKVYCWEDAMEKIIDDIRQVELKLTRK) lie on the Cytoplasmic side of the membrane. Residues 300 to 320 (VAYCRYFSSSAFFFSGFFVVF) traverse the membrane as a helical segment. The Extracellular segment spans residues 321–340 (LSVVPYAFIHTIKLRRIFTT). Residues 341–359 (ISYNIVLRMTVTRQFPSAI) traverse the membrane as a helical segment. At 360–867 (QTWYDSLGAI…YLRYVTTNRN (508 aa)) the chain is on the cytoplasmic side. Residues tryptophan 402, serine 435, 459–466 (GSTGSGKS), and glutamine 494 each bind ATP. The region spanning 424-647 (NGDDGLFFSN…KPDFSSQLLG (224 aa)) is the ABC transporter 1 domain. The tract at residues 655-840 (SAERRNSILT…EEINEEDLKE (186 aa)) is disordered R region. Residues 868–888 (LVFVLILCLVIFLAEVAASLA) form a helical membrane-spanning segment. Positions 868–1169 (LVFVLILCLV…AVNSSIDVDG (302 aa)) constitute an ABC transmembrane type-1 2 domain. Over 889–932 (GLWIISGLAINTGSQTNDTSTDLSHLSVFSKFITNGSHYYIFYI) the chain is Extracellular. N-linked (GlcNAc...) asparagine glycosylation is found at asparagine 905 and asparagine 923. The discontinuously helical transmembrane segment at 933–953 (YVGLADSFLALGVIRGLPLVH) threads the bilayer. Residues 954–1004 (TLVTVSKDLHKQMLHSVLQGPMTAFNKMKAGRILNRFIKDTAIIDDMLPLT) lie on the Cytoplasmic side of the membrane. The helical transmembrane segment at 1005 to 1025 (VFDFVQLILIVVGAICVVSVL) threads the bilayer. Residues 1026–1027 (QP) lie on the Extracellular side of the membrane. Residues 1028–1048 (YTLLAAIPVAVIFIMLRAYFL) form a helical membrane-spanning segment. The Cytoplasmic portion of the chain corresponds to 1049 to 1109 (RTSQQLKQLE…TANWFLYLST (61 aa)). A helical membrane pass occupies residues 1110 to 1130 (LRWFQMRIDIVFVLFFIAVTF). Residues 1131-1144 (IAIATHDVGEGQVG) are Extracellular-facing. The chain crosses the membrane as a helical span at residues 1145–1165 (IILTLAMNITSTLQWAVNSSI). The Cytoplasmic segment spans residues 1166–1492 (DVDGLMRSVS…AEEDLQETRL (327 aa)). Residues 1220-1453 (MMVNNLTAKY…ASLFKQVFGH (234 aa)) form the ABC transporter 2 domain. Residues tyrosine 1229 and 1254–1261 (GRTGAGKS) each bind ATP. The segment covering 1465 to 1474 (RNSSKRKTRP) has biased composition (basic residues). The disordered stretch occupies residues 1465 to 1492 (RNSSKRKTRPKISALQEEAEEDLQETRL). The segment covering 1481-1492 (EEAEEDLQETRL) has biased composition (acidic residues). The short motif at 1483–1485 (AEE) is the PDZ-binding element.

Belongs to the ABC transporter superfamily. ABCC family. CFTR transporter (TC 3.A.1.202) subfamily. In terms of assembly, monomer; does not require oligomerization for channel activity. May form oligomers in the membrane. In terms of processing, phosphorylated; cAMP treatment promotes phosphorylation and activates the channel. Dephosphorylation decreases the ATPase activity (in vitro). Phosphorylation at PKA sites activates the channel. Phosphorylation at PKC sites enhances the response to phosphorylation by PKA. In terms of tissue distribution, expressed in the rectal gland (at protein level).

Its subcellular location is the apical cell membrane. It localises to the early endosome membrane. The protein resides in the cell membrane. It is found in the recycling endosome membrane. The protein localises to the endoplasmic reticulum membrane. The catalysed reaction is ATP + H2O + closed Cl(-) channel = ADP + phosphate + open Cl(-) channel.. The enzyme catalyses chloride(in) = chloride(out). It carries out the reaction hydrogencarbonate(in) = hydrogencarbonate(out). It catalyses the reaction ATP + H2O = ADP + phosphate + H(+). In terms of biological role, epithelial ion channel that plays an important role in the regulation of epithelial ion and water transport and fluid homeostasis. Mediates the transport of chloride ions across the cell membrane. Possesses an intrinsic ATPase activity and utilizes ATP to gate its channel; the passive flow of anions through the channel is gated by cycles of ATP binding and hydrolysis by the ATP-binding domains. The ion channel is also permeable to HCO(3)(-); selectivity depends on the extracellular chloride concentration. Exerts its function also by modulating the activity of other ion channels and transporters. Contributes to the regulation of the pH and the ion content of the epithelial fluid layer. This chain is Cystic fibrosis transmembrane conductance regulator, found in Squalus acanthias (Spiny dogfish).